The sequence spans 417 residues: MLKREMNIADYDAELWQAMEQEKVRQEEHIELIASENYTSPRVMQAQGSQLTNKYAEGYPGKRYYGGCEYVDIVEQLAIDRAKELFGADYANVQPHSGSQANFAVYTALLEPGDTVLGMNLAHGGHLTHGSPVNFSGKLYNIVPYGIDASGHIDYADLEKQAKEHKPKMIIGGFSAYSGVVDWAKMREIADSIGAYLFVDMAHVAGLVAAGVYPNPVPHAHVVTTTTHKTLAGPRGGLILAKGGSEELYKKLNSAVFPGGQGGPLMHVIAGKAVALKEAMEPEFKTYQQQVAKNAKAMVEVFLERGYKVVSGGTDNHLFLVDLVDKNLTGKEADAALGRANITVNKNSVPNDPKSPFVTSGIRVGTPAITRRGFKEAEAKELAGWMCDVLDSINDEAVIERIKGKVLDICARYPVYA.

The residue at position 54 (K54) is an N6-acetyllysine. (6S)-5,6,7,8-tetrahydrofolate-binding positions include L121 and 125–127 (GHL). Residue K229 is modified to N6-(pyridoxal phosphate)lysine. Residues K250, K285, and K354 each carry the N6-acetyllysine modification. 355 to 357 (SPF) provides a ligand contact to (6S)-5,6,7,8-tetrahydrofolate. N6-acetyllysine is present on K375.

It belongs to the SHMT family. Homodimer. It depends on pyridoxal 5'-phosphate as a cofactor.

Its subcellular location is the cytoplasm. It catalyses the reaction (6R)-5,10-methylene-5,6,7,8-tetrahydrofolate + glycine + H2O = (6S)-5,6,7,8-tetrahydrofolate + L-serine. It participates in one-carbon metabolism; tetrahydrofolate interconversion. The protein operates within amino-acid biosynthesis; glycine biosynthesis; glycine from L-serine: step 1/1. Its function is as follows. Catalyzes the reversible interconversion of serine and glycine with tetrahydrofolate (THF) serving as the one-carbon carrier. This reaction serves as the major source of one-carbon groups required for the biosynthesis of purines, thymidylate, methionine, and other important biomolecules. Also exhibits THF-independent aldolase activity toward beta-hydroxyamino acids, producing glycine and aldehydes, via a retro-aldol mechanism. This is Serine hydroxymethyltransferase from Escherichia coli O17:K52:H18 (strain UMN026 / ExPEC).